The chain runs to 343 residues: Trace amine-associated receptor 3 (343 aa).

Topologically, residues 1–35 (MDLIYIPEDLSSCPKFGNKSCPPTNRSFRVRMIMY) are extracellular. Residues Asn-18 and Asn-25 are each glycosylated (N-linked (GlcNAc...) asparagine). 2 cysteine pairs are disulfide-bonded: Cys-21–Cys-185 and Cys-104–Cys-189. A helical transmembrane segment spans residues 36 to 56 (LFMTGAMVITIFGNLVIIISI). At 57–68 (SHFKQLHSPTNF) the chain is on the cytoplasmic side. The chain crosses the membrane as a helical span at residues 69-89 (LILSMATTDFLLGFVIMPYSM). Residues 90 to 150 (VRSVESCWYF…TTMTVSMIKR (61 aa)) lie on the Extracellular side of the membrane. The chain crosses the membrane as a helical span at residues 151–168 (LLAFCWAAPALFSFGLVL). Topologically, residues 169 to 172 (SEAN) are cytoplasmic. The tract at residues 173–186 (VSGMQSYEILVACF) is extracellular Loop 2 (ECL2). Residues 173–193 (VSGMQSYEILVACFNFCALTF) form a helical membrane-spanning segment. Residues 194 to 198 (NKFWG) lie on the Extracellular side of the membrane. The chain crosses the membrane as a helical span at residues 199–223 (TILFTTCFFTPGSIMVGIYGKIFIV). The Cytoplasmic portion of the chain corresponds to 224–257 (SRRHARALSDMPANTKGAVGKNLSKKKDRKAAKT). Residues 258-278 (LGIVMGVFLACWLPCFLAVLI) form a helical membrane-spanning segment. The Extracellular segment spans residues 279 to 287 (DPYLDYSTP). The helical transmembrane segment at 288-308 (IIVLDLLVWLGYFNSTCNPLI) threads the bilayer. At 309–343 (HGFFYPWFRKALQFIVSGKIFRSNSDTANLFPEAH) the chain is on the cytoplasmic side.

This sequence belongs to the G-protein coupled receptor 1 family. In terms of tissue distribution, specifically expressed in neurons of the olfactory epithelium.

It is found in the cell membrane. In terms of biological role, olfactory receptor activated by several primary trace amines, including isoamylamine. Activated by isoamylamine and cyclohexylamine, but not to the corresponding alcohols, isoamylalcohol and cyclohexanol. This receptor is probably mediated by the G(s)-class of G-proteins which activate adenylate cyclase. This Mus musculus (Mouse) protein is Trace amine-associated receptor 3.